The sequence spans 120 residues: Protein CcdB (120 aa).

Residues 3–118 (RVLVVDDAKF…KVLEAVSRVM (116 aa)) enclose the Response regulatory domain. At Asp-53 the chain carries 4-aspartylphosphate.

In Bacillus subtilis (strain 168), this protein is Protein CcdB (ccdB).